The sequence spans 185 residues: Pyruvate/ketoisovalerate oxidoreductases common subunit gamma (185 aa).

Heterotetramer of one alpha, one beta, one delta and one gamma chain.

It catalyses the reaction 2 oxidized [2Fe-2S]-[ferredoxin] + pyruvate + CoA = 2 reduced [2Fe-2S]-[ferredoxin] + acetyl-CoA + CO2 + H(+). The enzyme catalyses 3-methyl-2-oxobutanoate + 2 oxidized [2Fe-2S]-[ferredoxin] + CoA = 2-methylpropanoyl-CoA + 2 reduced [2Fe-2S]-[ferredoxin] + CO2 + H(+). The chain is Pyruvate/ketoisovalerate oxidoreductases common subunit gamma (porG) from Thermococcus kodakarensis (strain ATCC BAA-918 / JCM 12380 / KOD1) (Pyrococcus kodakaraensis (strain KOD1)).